An 85-amino-acid chain; its full sequence is MCILIVAVLFLTAWTFVMADDPRDEPDTVVRGGKLFSRARDEMNPAASKLNERDCVEVDYFCGIPFVFNGLCCSGNCVFVCTPQG.

The N-terminal stretch at 1–19 (MCILIVAVLFLTAWTFVMA) is a signal peptide. Positions 20-53 (DDPRDEPDTVVRGGKLFSRARDEMNPAASKLNER) are excised as a propeptide. Disulfide bonds link C55-C73, C62-C77, and C72-C81. The residue at position 84 (Q84) is a Glutamine amide.

Belongs to the conotoxin O1 family. Is not hydroxylated. Expressed by the venom duct.

It localises to the secreted. In terms of biological role, omega-conotoxins act at presynaptic membranes, they bind and block voltage-gated calcium channels (Cav). In Conus amadis (Amadis cone), this protein is Omega-conotoxin-like Am6.5.